We begin with the raw amino-acid sequence, 30 residues long: Truncated interleukin-1-binding protein (30 aa).

The signal sequence occupies residues 1 to 18 (MSILPVIFLPIFFYSSFV).

This sequence belongs to the interleukin-1 receptor family.

The polypeptide is Truncated interleukin-1-binding protein (Vaccinia virus (strain Copenhagen) (VACV)).